A 174-amino-acid chain; its full sequence is ATP synthase subunit d, mitochondrial (174 aa).

N-acetylserine is present on S2.

The protein belongs to the ATPase d subunit family.

It localises to the mitochondrion inner membrane. In terms of biological role, mitochondrial membrane ATP synthase (F(1)F(0) ATP synthase or Complex V) produces ATP from ADP in the presence of a proton gradient across the membrane which is generated by electron transport complexes of the respiratory chain. F-type ATPases consist of two structural domains, F(1) - containing the extramembraneous catalytic core, and F(0) - containing the membrane proton channel, linked together by a central stalk and a peripheral stalk. During catalysis, ATP synthesis in the catalytic domain of F(1) is coupled via a rotary mechanism of the central stalk subunits to proton translocation. Part of the complex F(0) domain and the peripheric stalk, which acts as a stator to hold the catalytic alpha(3)beta(3) subcomplex and subunit a/ATP6 static relative to the rotary elements. This is ATP synthase subunit d, mitochondrial (ATP7) from Kluyveromyces lactis (strain ATCC 8585 / CBS 2359 / DSM 70799 / NBRC 1267 / NRRL Y-1140 / WM37) (Yeast).